Consider the following 348-residue polypeptide: Rhodopsin (348 aa).

Met1 is modified (N-acetylmethionine). The Extracellular portion of the chain corresponds to 1 to 36 (MNGTEGPNFYVPFSNKTGVVRSPFEYPQYYLAEPWQ). 2 N-linked (GlcNAc...) asparagine glycosylation sites follow: Asn2 and Asn15. Residues 37-61 (FSMLAAYMFLLIVLGFPINFLTLYV) form a helical membrane-spanning segment. The Cytoplasmic segment spans residues 62 to 73 (TVQHKNVRTPLN). Residues 74–96 (YILLNLAVANHFMVFGGFTTTLY) traverse the membrane as a helical segment. The Extracellular segment spans residues 97-110 (TSLHGYFVFGSTGC). Cys110 and Cys187 are disulfide-bonded. The chain crosses the membrane as a helical span at residues 111–133 (NLEGFFATLGGEIALWSLVVLAI). The short motif at 134 to 136 (ERY) is the 'Ionic lock' involved in activated form stabilization element. Residues 134–152 (ERYVVVCKPMSNFRFGENH) are Cytoplasmic-facing. The chain crosses the membrane as a helical span at residues 153 to 173 (AIMGVAFTWVMALACAAPPLV). The Extracellular segment spans residues 174-202 (GWSRYIPEGMQCSCGIDYYTLKPEVNNES). Glu201 contributes to the Zn(2+) binding site. A helical membrane pass occupies residues 203–224 (FVIYMFVVHFTIPMTIIFFCYG). The Cytoplasmic portion of the chain corresponds to 225-252 (QLVFTVKEAAAQQQESATTQKAEKEVTR). A helical membrane pass occupies residues 253–274 (MVIIMVIAFLICWVPYASVAFY). Over 275–286 (IFTHQGSDFGPI) the chain is Extracellular. Zn(2+) is bound at residue Gln279. The chain crosses the membrane as a helical span at residues 287–308 (LMTLPAFFAKSSAIYNPVIYIM). Lys296 is subject to N6-(retinylidene)lysine. The Cytoplasmic segment spans residues 309-348 (MNKQFRNCMLTTICCGKNPFGEEEGSTTASKTETSQVAPA). 2 S-palmitoyl cysteine lipidation sites follow: Cys322 and Cys323. Residues 330 to 348 (EEEGSTTASKTETSQVAPA) form an interaction with SAG region. At Ser334 the chain carries Phosphoserine. Phosphothreonine is present on residues Thr335 and Thr336. A Phosphoserine modification is found at Ser338. Phosphothreonine is present on residues Thr340 and Thr342. At Ser343 the chain carries Phosphoserine.

This sequence belongs to the G-protein coupled receptor 1 family. Opsin subfamily. In terms of assembly, homodimer. May form a complex composed of RHO, GRK1 and RCVRN in a Ca(2+)-dependent manner; RCVRN prevents the interaction between GRK1 and RHO. Interacts with GRK1. Interacts (phosphorylated form) with SAG. Interacts with GNAT1. Interacts with GNAT3. SAG and G-proteins compete for a common binding site. Interacts with PRCD; the interaction promotes PRCD stability. Forms a complex with ASAP1 and ARF4. Forms a complex with ASAP1, RAB11A, Rabin8/RAB3IP, ARF4 and RAB11FIP3; the complex regulates Golgi-to-cilia rhodopsin/RHO transport in photoreceptors. Phosphorylated on some or all of the serine and threonine residues present in the C-terminal region. In terms of processing, contains one covalently linked retinal chromophore. Upon light absorption, the covalently bound 11-cis-retinal is converted to all-trans-retinal. After hydrolysis of the Schiff base and release of the covalently bound all-trans-retinal, active rhodopsin is regenerated by binding of a fresh molecule of 11-cis-retinal.

The protein resides in the membrane. It is found in the cell projection. Its subcellular location is the cilium. The protein localises to the photoreceptor outer segment. In terms of biological role, photoreceptor required for image-forming vision at low light intensity. Required for photoreceptor cell viability after birth. Light-induced isomerization of 11-cis to all-trans retinal triggers a conformational change that activates signaling via G-proteins. Subsequent receptor phosphorylation mediates displacement of the bound G-protein alpha subunit by the arrestin SAG and terminates signaling. This is Rhodopsin (RHO) from Loxodonta africana (African elephant).